The primary structure comprises 126 residues: Histone H2B type 1-J (126 aa).

A compositionally biased stretch (low complexity) spans 1-12; that stretch reads MPEPAKSAPAPK. Residues 1 to 35 form a disordered region; it reads MPEPAKSAPAPKKGSKKAVTKAQKKDGKKRKRSRK. At proline 2 the chain carries N-acetylproline. Glutamate 3 is subject to ADP-ribosyl glutamic acid. Lysine 6 is subject to N6-(2-hydroxyisobutyryl)lysine; alternate. Lysine 6 carries the post-translational modification N6-(beta-hydroxybutyryl)lysine; alternate. N6-acetyllysine; alternate is present on lysine 6. Lysine 6 carries the post-translational modification N6-butyryllysine; alternate. N6-crotonyllysine; alternate is present on lysine 6. The residue at position 6 (lysine 6) is an N6-lactoyllysine; alternate. Residue lysine 6 forms a Glycyl lysine isopeptide (Lys-Gly) (interchain with G-Cter in SUMO2); alternate linkage. Serine 7 bears the ADP-ribosylserine mark. Lysine 12 is modified (N6-(beta-hydroxybutyryl)lysine; alternate). N6-acetyllysine; alternate is present on residues lysine 12 and lysine 13. Residues lysine 12 and lysine 13 each carry the N6-crotonyllysine; alternate modification. N6-lactoyllysine; alternate is present on lysine 12. Lysine 13 is modified (N6-(2-hydroxyisobutyryl)lysine; alternate). A Phosphoserine; by STK4/MST1 modification is found at serine 15. Residues lysine 16, lysine 17, lysine 21, and lysine 24 each carry the N6-acetyllysine; alternate modification. N6-crotonyllysine; alternate is present on residues lysine 16, lysine 17, lysine 21, and lysine 24. Lysine 16, lysine 17, lysine 21, and lysine 24 each carry N6-lactoyllysine; alternate. Lysine 17 and lysine 21 each carry N6-(beta-hydroxybutyryl)lysine; alternate. An N6-glutaryllysine; alternate modification is found at lysine 17. N6-(2-hydroxyisobutyryl)lysine; alternate occurs at positions 21 and 24. Lysine 21 is subject to N6-butyryllysine; alternate. Lysine 21 participates in a covalent cross-link: Glycyl lysine isopeptide (Lys-Gly) (interchain with G-Cter in SUMO2); alternate. Lysine 25 is modified (N6-(2-hydroxyisobutyryl)lysine). An N6-(2-hydroxyisobutyryl)lysine; alternate modification is found at lysine 35. Lysine 35 is modified (N6-(beta-hydroxybutyryl)lysine; alternate). Lysine 35 carries the post-translational modification N6-crotonyllysine; alternate. At lysine 35 the chain carries N6-glutaryllysine; alternate. N6-succinyllysine; alternate is present on lysine 35. Lysine 35 participates in a covalent cross-link: Glycyl lysine isopeptide (Lys-Gly) (interchain with G-Cter in ubiquitin); alternate. The residue at position 36 (glutamate 36) is a PolyADP-ribosyl glutamic acid. The residue at position 37 (serine 37) is a Phosphoserine; by AMPK. N6-(2-hydroxyisobutyryl)lysine; alternate occurs at positions 44, 47, and 58. Lysine 44 bears the N6-lactoyllysine; alternate mark. N6-glutaryllysine; alternate occurs at positions 44 and 47. Lysine 47 is subject to N6-methyllysine; alternate. Lysine 58 is modified (N6,N6-dimethyllysine; alternate). Arginine 80 carries the post-translational modification Dimethylated arginine. Lysine 86 is modified (N6-(2-hydroxyisobutyryl)lysine; alternate). The residue at position 86 (lysine 86) is an N6-(beta-hydroxybutyryl)lysine; alternate. N6-acetyllysine; alternate is present on lysine 86. Lysine 86 carries the post-translational modification N6-lactoyllysine; alternate. Lysine 86 carries the N6,N6,N6-trimethyllysine; alternate modification. Residues arginine 87 and arginine 93 each carry the omega-N-methylarginine modification. Lysine 109 is subject to N6-(2-hydroxyisobutyryl)lysine; alternate. Position 109 is an N6-lactoyllysine; alternate (lysine 109). An N6-glutaryllysine; alternate modification is found at lysine 109. An N6-methyllysine; alternate modification is found at lysine 109. A glycan (O-linked (GlcNAc) serine) is linked at serine 113. A Phosphothreonine modification is found at threonine 116. Residues lysine 117 and lysine 121 each carry the N6-(2-hydroxyisobutyryl)lysine; alternate modification. Residues lysine 117 and lysine 121 each carry the N6-(beta-hydroxybutyryl)lysine; alternate modification. 2 positions are modified to N6-lactoyllysine; alternate: lysine 117 and lysine 121. Residues lysine 117 and lysine 121 each carry the N6-glutaryllysine; alternate modification. N6-succinyllysine; alternate is present on residues lysine 117 and lysine 121. Lysine 117 is subject to N6-malonyllysine; alternate. At lysine 117 the chain carries N6-methylated lysine; alternate. Residue lysine 121 forms a Glycyl lysine isopeptide (Lys-Gly) (interchain with G-Cter in ubiquitin); alternate linkage.

Belongs to the histone H2B family. The nucleosome is a histone octamer containing two molecules each of H2A, H2B, H3 and H4 assembled in one H3-H4 heterotetramer and two H2A-H2B heterodimers. The octamer wraps approximately 147 bp of DNA. Heterodimer H2BC11 and H2AZ1 interacts with VPS72 (via N-terminal domain). In terms of processing, monoubiquitination at Lys-35 (H2BK34Ub) by the MSL1/MSL2 dimer is required for histone H3 'Lys-4' (H3K4me) and 'Lys-79' (H3K79me) methylation and transcription activation at specific gene loci, such as HOXA9 and MEIS1 loci. Similarly, monoubiquitination at Lys-121 (H2BK120Ub) by the RNF20/40 complex gives a specific tag for epigenetic transcriptional activation and is also prerequisite for histone H3 'Lys-4' and 'Lys-79' methylation. It also functions cooperatively with the FACT dimer to stimulate elongation by RNA polymerase II. H2BK120Ub also acts as a regulator of mRNA splicing: deubiquitination by USP49 is required for efficient cotranscriptional splicing of a large set of exons. Phosphorylation at Ser-37 (H2BS36ph) by AMPK in response to stress promotes transcription. Phosphorylated on Ser-15 (H2BS14ph) by STK4/MST1 during apoptosis; which facilitates apoptotic chromatin condensation. Also phosphorylated on Ser-15 in response to DNA double strand breaks (DSBs), and in correlation with somatic hypermutation and immunoglobulin class-switch recombination. Post-translationally, glcNAcylation at Ser-113 promotes monoubiquitination of Lys-121. It fluctuates in response to extracellular glucose, and associates with transcribed genes. In terms of processing, ADP-ribosylated by PARP1 or PARP2 on Ser-7 (H2BS6ADPr) in response to DNA damage. H2BS6ADPr promotes recruitment of CHD1L. Mono-ADP-ribosylated on Glu-3 (H2BE2ADPr) by PARP3 in response to single-strand breaks. Poly ADP-ribosylation on Glu-36 (H2BE35ADPr) by PARP1 regulates adipogenesis: it inhibits phosphorylation at Ser-37 (H2BS36ph), thereby blocking expression of pro-adipogenetic genes. Crotonylation (Kcr) is specifically present in male germ cells and marks testis-specific genes in post-meiotic cells, including X-linked genes that escape sex chromosome inactivation in haploid cells. Crotonylation marks active promoters and enhancers and confers resistance to transcriptional repressors. It is also associated with post-meiotically activated genes on autosomes. Post-translationally, lactylated in macrophages by EP300/P300 by using lactoyl-CoA directly derived from endogenous or exogenous lactate, leading to stimulates gene transcription.

The protein resides in the nucleus. Its subcellular location is the chromosome. In terms of biological role, core component of nucleosome. Nucleosomes wrap and compact DNA into chromatin, limiting DNA accessibility to the cellular machineries which require DNA as a template. Histones thereby play a central role in transcription regulation, DNA repair, DNA replication and chromosomal stability. DNA accessibility is regulated via a complex set of post-translational modifications of histones, also called histone code, and nucleosome remodeling. Its function is as follows. Has broad antibacterial activity. May contribute to the formation of the functional antimicrobial barrier of the colonic epithelium, and to the bactericidal activity of amniotic fluid. The sequence is that of Histone H2B type 1-J from Homo sapiens (Human).